Here is a 331-residue protein sequence, read N- to C-terminus: Pyrimidine monooxygenase RutA (331 aa).

Residues 79–80 (IK), asparagine 145, glutamate 154, 170–171 (RY), and serine 220 each bind FMN. The segment at 300–331 (WLTEQSQKDTRSGTDTNVRQMADPTSASAFNH) is disordered. Residues 312–331 (GTDTNVRQMADPTSASAFNH) show a composition bias toward polar residues.

The protein belongs to the NtaA/SnaA/DszA monooxygenase family. RutA subfamily.

The catalysed reaction is uracil + FMNH2 + NADH + O2 = (Z)-3-ureidoacrylate + FMN + NAD(+) + H2O + H(+). The enzyme catalyses thymine + FMNH2 + NADH + O2 = (Z)-2-methylureidoacrylate + FMN + NAD(+) + H2O + H(+). In terms of biological role, catalyzes the pyrimidine ring opening between N-3 and C-4 by an unusual flavin hydroperoxide-catalyzed mechanism, adding oxygen atoms in the process to yield ureidoacrylate peracid, that immediately reacts with FMN forming ureidoacrylate and FMN-N(5)-oxide. The FMN-N(5)-oxide reacts spontaneously with NADH to produce FMN. Requires the flavin reductase RutF to regenerate FMN in vivo. In Escherichia coli O7:K1 (strain IAI39 / ExPEC), this protein is Pyrimidine monooxygenase RutA.